The sequence spans 89 residues: Small ribosomal subunit protein uS15 (89 aa).

The protein belongs to the universal ribosomal protein uS15 family. Part of the 30S ribosomal subunit. Forms a bridge to the 50S subunit in the 70S ribosome, contacting the 23S rRNA.

One of the primary rRNA binding proteins, it binds directly to 16S rRNA where it helps nucleate assembly of the platform of the 30S subunit by binding and bridging several RNA helices of the 16S rRNA. Functionally, forms an intersubunit bridge (bridge B4) with the 23S rRNA of the 50S subunit in the ribosome. In Brucella abortus (strain S19), this protein is Small ribosomal subunit protein uS15.